The following is a 105-amino-acid chain: MKFLALFFLALVGVAFAYDGGMDGMDMIKSYSILGAMIGLGIAAFGGAIGMGNAAAATITGTARNPGVGGKLLTTMFVAMAMIEAQVIYTLVFAIIAIYSNPFLS.

The next 3 helical transmembrane spans lie at 3 to 23, 32 to 52, and 78 to 98; these read FLAL…GGMD, SILG…IGMG, and VAMA…IIAI.

This sequence belongs to the ATPase C chain family. F-type ATPases have 2 components, F(1) - the catalytic core - and F(0) - the membrane proton channel. F(1) has five subunits: alpha(3), beta(3), gamma(1), delta(1), epsilon(1). F(0) has three main subunits: a(1), b(2) and c(10-14). The alpha and beta chains form an alternating ring which encloses part of the gamma chain. F(1) is attached to F(0) by a central stalk formed by the gamma and epsilon chains, while a peripheral stalk is formed by the delta and b chains.

The protein resides in the cell inner membrane. F(1)F(0) ATP synthase produces ATP from ADP in the presence of a proton or sodium gradient. F-type ATPases consist of two structural domains, F(1) containing the extramembraneous catalytic core and F(0) containing the membrane proton channel, linked together by a central stalk and a peripheral stalk. During catalysis, ATP synthesis in the catalytic domain of F(1) is coupled via a rotary mechanism of the central stalk subunits to proton translocation. In terms of biological role, key component of the F(0) channel; it plays a direct role in translocation across the membrane. A homomeric c-ring of between 10-14 subunits forms the central stalk rotor element with the F(1) delta and epsilon subunits. The protein is ATP synthase subunit c of Helicobacter acinonychis (strain Sheeba).